Reading from the N-terminus, the 220-residue chain is UPF0319 protein Asuc_1002 (220 aa).

A signal peptide spans 1–21; the sequence is MKFRLAAVAAAALLASSASFA.

It belongs to the UPF0319 family.

The chain is UPF0319 protein Asuc_1002 from Actinobacillus succinogenes (strain ATCC 55618 / DSM 22257 / CCUG 43843 / 130Z).